Reading from the N-terminus, the 637-residue chain is Chaperone protein HtpG (637 aa).

The interval 1–345 is a; substrate-binding; sequence MTAAQKETLG…SNDLPLNVSR (345 aa). The tract at residues 346–562 is b; it reads EILQDNKVTQ…DNDMSSQMQK (217 aa). The c stretch occupies residues 563–637; it reads LMESVGQAAP…LNKLMLELSK (75 aa).

Belongs to the heat shock protein 90 family. As to quaternary structure, homodimer.

It is found in the cytoplasm. Functionally, molecular chaperone. Has ATPase activity. In Pseudoalteromonas translucida (strain TAC 125), this protein is Chaperone protein HtpG.